A 1382-amino-acid polypeptide reads, in one-letter code: DNA-directed RNA polymerase subunit beta'' (1382 aa).

Residues Cys-224, Cys-294, Cys-301, and Cys-304 each coordinate Zn(2+).

This sequence belongs to the RNA polymerase beta' chain family. RpoC2 subfamily. In terms of assembly, in plastids the minimal PEP RNA polymerase catalytic core is composed of four subunits: alpha, beta, beta', and beta''. When a (nuclear-encoded) sigma factor is associated with the core the holoenzyme is formed, which can initiate transcription. Requires Zn(2+) as cofactor.

It localises to the plastid. The protein localises to the chloroplast. The enzyme catalyses RNA(n) + a ribonucleoside 5'-triphosphate = RNA(n+1) + diphosphate. Its function is as follows. DNA-dependent RNA polymerase catalyzes the transcription of DNA into RNA using the four ribonucleoside triphosphates as substrates. In Dioscorea elephantipes (Elephant's foot yam), this protein is DNA-directed RNA polymerase subunit beta''.